The sequence spans 390 residues: Isoaspartyl dipeptidase (390 aa).

Zn(2+) is bound by residues His-68 and His-70. Residues 75–77 (GGE), Thr-106, and Tyr-137 each bind substrate. Lys-162 contacts Zn(2+). Residue Lys-162 is modified to N6-carboxylysine. Arg-169 is a substrate binding site. Zn(2+) is bound by residues His-201 and His-230. A substrate-binding site is contributed by Arg-233. Asp-285 is a Zn(2+) binding site. The active-site Proton acceptor is Asp-285. Ser-289 lines the substrate pocket.

This sequence belongs to the peptidase M38 family. Zn(2+) is required as a cofactor. It depends on Co(2+) as a cofactor. Post-translationally, carboxylation allows a single lysine to coordinate two zinc ions.

It localises to the cytoplasm. With respect to regulation, P-hydroxymercuribenzoate causes a slight inhibition (8 to 17 %). Iodoacetamide, o-iodosobenzoate and ammonium persulfate do not inhibit the enzyme activity. In terms of biological role, catalyzes the hydrolytic cleavage of a subset of L-isoaspartyl (L-beta-aspartyl) dipeptides. Used to degrade proteins damaged by L-isoaspartyl residues formation. The best substrate for the enzyme reported thus far is iso-Asp-Leu. The protein is Isoaspartyl dipeptidase (iadA) of Escherichia coli (strain K12).